We begin with the raw amino-acid sequence, 145 residues long: UPF0735 ACT domain-containing protein CLL_A2896 (145 aa).

The region spanning 69–144 (TFNLIVKDQT…YVEKIEFVAM (76 aa)) is the ACT domain.

This sequence belongs to the UPF0735 family.

The polypeptide is UPF0735 ACT domain-containing protein CLL_A2896 (Clostridium botulinum (strain Eklund 17B / Type B)).